A 436-amino-acid chain; its full sequence is Protein translocase subunit SecY (436 aa).

A run of 10 helical transmembrane segments spans residues 18-38 (IAFTLGLIAVYRMGDFVPATG), 69-89 (LLQVSVFALGIMPYITASIIV), 116-138 (YTRYLTLALALLQATTMASLART), 154-174 (ILTVLLVVIALTTGCLIVMWF), 187-207 (MSLLIFTSIAAGFPAGLGQVV), 214-234 (VFAIVMGIGLLTMLAIVFVEE), 266-286 (MANVIPVIFASSVLMLPGILI), 314-334 (PVYMALYFLLIIGFTYFYVSI), 375-395 (VVGALYLGIVAMIPLIAFAVI), and 396-416 (GTSQNFPLGGTSILIMVGVGL).

This sequence belongs to the SecY/SEC61-alpha family. As to quaternary structure, component of the Sec protein translocase complex. Heterotrimer consisting of SecY, SecE and SecG subunits. The heterotrimers can form oligomers, although 1 heterotrimer is thought to be able to translocate proteins. Interacts with the ribosome. Interacts with SecDF, and other proteins may be involved. Interacts with SecA.

Its subcellular location is the cell membrane. In terms of biological role, the central subunit of the protein translocation channel SecYEG. Consists of two halves formed by TMs 1-5 and 6-10. These two domains form a lateral gate at the front which open onto the bilayer between TMs 2 and 7, and are clamped together by SecE at the back. The channel is closed by both a pore ring composed of hydrophobic SecY resides and a short helix (helix 2A) on the extracellular side of the membrane which forms a plug. The plug probably moves laterally to allow the channel to open. The ring and the pore may move independently. This is Protein translocase subunit SecY from Micrococcus luteus (Micrococcus lysodeikticus).